The primary structure comprises 419 residues: L-rhamnose isomerase (419 aa).

Mn(2+) contacts are provided by H262, D294, and D296.

The protein belongs to the rhamnose isomerase family. As to quaternary structure, homotetramer. It depends on Mn(2+) as a cofactor.

It localises to the cytoplasm. The enzyme catalyses L-rhamnopyranose = L-rhamnulose. Its pathway is carbohydrate degradation; L-rhamnose degradation; glycerone phosphate from L-rhamnose: step 1/3. Catalyzes the interconversion of L-rhamnose and L-rhamnulose. In Escherichia coli O7:K1 (strain IAI39 / ExPEC), this protein is L-rhamnose isomerase.